A 664-amino-acid polypeptide reads, in one-letter code: MAGLIPQSFIDDLLNRTDIVEVVSSRIQLKKTGKNYSACCPFHKEKTPSFTVSPDKQFYYCFGCGAGGNALGFVMDHDQLEFPQAVEELAKRAGMDVPREERGGRGHTPRQPTDSPLYPLLSAAAEFYKQALKSHPARKAAVNYLKGRGLTGEIARDFGLGFAPPGWDNLLKHLGGDNLQLKAMLDAGLLVENSDTGKRYDRFRDRVMFPIRDSRGRIIAFGGRVLGDDKPKYLNSPETPVFHKGQELYGLYEARQKNRDLDEIMVVEGYMDVIALAQQGIRNAVATLGTATSEEHIKRLFRLVPSILFCFDGDQAGRKAAWRALESVLPNLQDGKRVRFLFLPEGEDPDSLVRAEGEDAFRARITQQAQPLAEYFFQQLMLEADPATLEGKAHLATLAAPLLEKIPGNNLRLLMRQRLSEITGLSGENIGQLAHHSPPPSSMDHGASGVLDGDDYFAASAYYENEPSHAPFDAAPGYVEAQPRKSWNKDKKPWDGKKWDGKKKWDKGGRGDFKAPQRTPVSVESTTLNALRTLLHHPQLALKVDDAGTLAREQDTYAQLLVSLLEALQKNPRQSSMQLIARWHGTPQGRLLQALGEKEWLIVQENLEKQFFDTITKLSESQRFGEREERLRSVMQKSYSELTDEEKALLREHYSVAASSPSQS.

Residues Cys40–Cys64 form a CHC2-type zinc finger. The segment covering Gly94 to Gly104 has biased composition (basic and acidic residues). Residues Gly94–Ser115 form a disordered region. Positions Asp262–Pro344 constitute a Toprim domain. 3 residues coordinate Mg(2+): Glu268, Asp312, and Asp314. Positions Pro483–Val521 are disordered. Positions Trp487 to Ala515 are enriched in basic and acidic residues.

The protein belongs to the DnaG primase family. As to quaternary structure, monomer. Interacts with DnaB. The cofactor is Zn(2+). Mg(2+) is required as a cofactor.

It catalyses the reaction ssDNA + n NTP = ssDNA/pppN(pN)n-1 hybrid + (n-1) diphosphate.. RNA polymerase that catalyzes the synthesis of short RNA molecules used as primers for DNA polymerase during DNA replication. This is DNA primase from Pseudomonas aeruginosa (strain ATCC 15692 / DSM 22644 / CIP 104116 / JCM 14847 / LMG 12228 / 1C / PRS 101 / PAO1).